A 76-amino-acid polypeptide reads, in one-letter code: Acyl carrier protein (76 aa).

The Carrier domain maps to 1 to 76 (MSVEEKVKKI…DAIDYVSNKQ (76 aa)). Ser36 carries the post-translational modification O-(pantetheine 4'-phosphoryl)serine.

The protein belongs to the acyl carrier protein (ACP) family. 4'-phosphopantetheine is transferred from CoA to a specific serine of apo-ACP by AcpS. This modification is essential for activity because fatty acids are bound in thioester linkage to the sulfhydryl of the prosthetic group.

It localises to the cytoplasm. The protein operates within lipid metabolism; fatty acid biosynthesis. Its function is as follows. Carrier of the growing fatty acid chain in fatty acid biosynthesis. This Nitratidesulfovibrio vulgaris (strain ATCC 29579 / DSM 644 / CCUG 34227 / NCIMB 8303 / VKM B-1760 / Hildenborough) (Desulfovibrio vulgaris) protein is Acyl carrier protein.